The primary structure comprises 337 residues: DNA-directed RNA polymerase subunit alpha (337 aa).

The tract at residues 1–233 (MIQKNWQELI…DQLSIFVNFE (233 aa)) is alpha N-terminal domain (alpha-NTD). The segment at 249–337 (FNPALLKKVD…DLAKRYEDQY (89 aa)) is alpha C-terminal domain (alpha-CTD).

It belongs to the RNA polymerase alpha chain family. As to quaternary structure, homodimer. The RNAP catalytic core consists of 2 alpha, 1 beta, 1 beta' and 1 omega subunit. When a sigma factor is associated with the core the holoenzyme is formed, which can initiate transcription.

It carries out the reaction RNA(n) + a ribonucleoside 5'-triphosphate = RNA(n+1) + diphosphate. Functionally, DNA-dependent RNA polymerase catalyzes the transcription of DNA into RNA using the four ribonucleoside triphosphates as substrates. The polypeptide is DNA-directed RNA polymerase subunit alpha (Brucella suis (strain ATCC 23445 / NCTC 10510)).